We begin with the raw amino-acid sequence, 173 residues long: Alpha-crystallin A chain (173 aa).

M1 bears the N-acetylmethionine mark. The interval 1 to 63 (MDIAIQHPWF…RSVLDSGVSE (63 aa)) is required for complex formation with BFSP1 and BFSP2. A Deamidated glutamine; partial modification is found at Q6. S45 bears the Phosphoserine mark. Q50 is modified (deamidated glutamine; partial). Positions 52-162 (LFRSVLDSGV…GHSERAIPVS (111 aa)) constitute a sHSP domain. K70 is subject to N6-acetyllysine. Q90 is modified (deamidated glutamine; partial). Residue K99 is modified to N6-acetyllysine. H100 contributes to the Zn(2+) binding site. N101 is modified (deamidated asparagine; partial). Zn(2+) is bound by residues E102 and H107. S122 carries the phosphoserine modification. At N123 the chain carries Deamidated asparagine; partial. Residues 144-173 (PKIPSGMDAGHSERAIPVSREEKPSSAPSS) are disordered. The span at 153-167 (GHSERAIPVSREEKP) shows a compositional bias: basic and acidic residues. A Zn(2+)-binding site is contributed by H154. Residue S162 is glycosylated (O-linked (GlcNAc) serine).

The protein belongs to the small heat shock protein (HSP20) family. Heteromer composed of three CRYAA and one CRYAB subunits. Inter-subunit bridging via zinc ions enhances stability, which is crucial as there is no protein turn over in the lens. Can also form homodimers and homotetramers (dimers of dimers) which serve as the building blocks of homooligomers. Within homooligomers, the zinc-binding motif is created from residues of 3 different molecules. His-100 and Glu-102 from one molecule are ligands of the zinc ion, and His-107 and His-154 residues from additional molecules complete the site with tetrahedral coordination geometry. Part of a complex required for lens intermediate filament formation composed of BFSP1, BFSP2 and CRYAA. Post-translationally, acetylation at Lys-70 may increase chaperone activity. In terms of processing, undergoes age-dependent proteolytical cleavage at the C-terminus.

The protein resides in the cytoplasm. It is found in the nucleus. Contributes to the transparency and refractive index of the lens. Acts as a chaperone, preventing aggregation of various proteins under a wide range of stress conditions. Required for the correct formation of lens intermediate filaments as part of a complex composed of BFSP1, BFSP2 and CRYAA. This Ceratotherium simum (White rhinoceros) protein is Alpha-crystallin A chain (CRYAA).